Reading from the N-terminus, the 219-residue chain is Multiple organellar RNA editing factor 2, chloroplastic (219 aa).

The transit peptide at 1–48 (MALPLSGTRHLTRALLSNVTLMAPPRIPSSVHYGGSRLGCSTRFFSIR) directs the protein to the chloroplast. Positions 182–219 (VQRSPERQRRVEPQPQRAQDRPRYNDRTRYSRRRENTR) are disordered. The span at 185–219 (SPERQRRVEPQPQRAQDRPRYNDRTRYSRRRENTR) shows a compositional bias: basic and acidic residues.

The protein belongs to the MORF family. As to quaternary structure, homodimer and heterodimer with MORF9. Interacts with protoporphyrinogen oxidase 1 PPOX1. Heterodimers with MORF8/RIP1 and MORF9/RIP9. Interacts with PCMP-A2/PMD1. Interacts with ORRM1. Interacts with ORRM6.

It localises to the plastid. The protein resides in the chloroplast. In terms of biological role, involved in plastid rRNA processing and consequently in translation and early chloroplast differentiation. Involved in organellar RNA editing. Required for the processing of multiple editing sites in plastids. The protein is Multiple organellar RNA editing factor 2, chloroplastic of Arabidopsis thaliana (Mouse-ear cress).